Consider the following 400-residue polypeptide: Serine/threonine transporter SstT (400 aa).

8 helical membrane passes run 14–34 (IIIAIILGIGVALLFPTVTPY), 48–68 (SVAPILAFVLVLSSIANFQVG), 76–96 (VLLLYVVGMLLAAFSAVIASL), 136–156 (AISEANFIGILAWAIGLGLAM), 177–197 (IIHKVIAFAPVGIFGLVAVTF), 211–231 (LLAVLLGTMLFVALVINPILV), 293–313 (LAGAAVTITVLTLATVHTLGI), and 334–354 (ASGVAGGSLLLIPVACSLFGI).

It belongs to the dicarboxylate/amino acid:cation symporter (DAACS) (TC 2.A.23) family.

It localises to the cell inner membrane. The catalysed reaction is L-serine(in) + Na(+)(in) = L-serine(out) + Na(+)(out). The enzyme catalyses L-threonine(in) + Na(+)(in) = L-threonine(out) + Na(+)(out). Involved in the import of serine and threonine into the cell, with the concomitant import of sodium (symport system). The polypeptide is Serine/threonine transporter SstT (Acinetobacter baumannii (strain SDF)).